Consider the following 98-residue polypeptide: MMCGAPSATQPATAETQHIADQVRSQLEEKENKKFPVFKAVSFKSQVVAGTNYFIKVHVGDEDFVHLRVFQSLPHENKPLTLSNYQTNKAKHDELTYF.

At methionine 1 the chain carries N-acetylmethionine. The Secondary area of contact signature appears at 46–50 (QVVAG).

It belongs to the cystatin family. In terms of assembly, able to form dimers stabilized by noncovalent forces.

The protein localises to the cytoplasm. Its subcellular location is the nucleus. In terms of biological role, this is an intracellular thiol proteinase inhibitor. Tightly binding reversible inhibitor of cathepsins L, H and B. The protein is Cystatin-B (CSTB) of Pongo pygmaeus (Bornean orangutan).